A 432-amino-acid polypeptide reads, in one-letter code: Putative D-alanyl-D-alanine carboxypeptidase (432 aa).

A helical; Signal-anchor transmembrane segment spans residues 7 to 25 (ATVLLTFSLSAFAVEYPVL).

Belongs to the peptidase S12 family. YfeW subfamily.

Its subcellular location is the cell inner membrane. The enzyme catalyses Preferential cleavage: (Ac)2-L-Lys-D-Ala-|-D-Ala. Also transpeptidation of peptidyl-alanyl moieties that are N-acyl substituents of D-alanine.. The protein is Putative D-alanyl-D-alanine carboxypeptidase of Salmonella agona (strain SL483).